Here is a 125-residue protein sequence, read N- to C-terminus: Small ribosomal subunit protein uS12 (125 aa).

At Asp89 the chain carries 3-methylthioaspartic acid. Residues 105-125 (QGVKDRKQSRSKYGAKKPKAK) are disordered. Residues 113–125 (SRSKYGAKKPKAK) are compositionally biased toward basic residues.

Belongs to the universal ribosomal protein uS12 family. As to quaternary structure, part of the 30S ribosomal subunit. Contacts proteins S8 and S17. May interact with IF1 in the 30S initiation complex.

In terms of biological role, with S4 and S5 plays an important role in translational accuracy. Its function is as follows. Interacts with and stabilizes bases of the 16S rRNA that are involved in tRNA selection in the A site and with the mRNA backbone. Located at the interface of the 30S and 50S subunits, it traverses the body of the 30S subunit contacting proteins on the other side and probably holding the rRNA structure together. The combined cluster of proteins S8, S12 and S17 appears to hold together the shoulder and platform of the 30S subunit. The chain is Small ribosomal subunit protein uS12 from Delftia acidovorans (strain DSM 14801 / SPH-1).